The primary structure comprises 121 residues: Large ribosomal subunit protein bL12 (121 aa).

This sequence belongs to the bacterial ribosomal protein bL12 family. In terms of assembly, homodimer. Part of the ribosomal stalk of the 50S ribosomal subunit. Forms a multimeric L10(L12)X complex, where L10 forms an elongated spine to which 2 to 4 L12 dimers bind in a sequential fashion. Binds GTP-bound translation factors.

Functionally, forms part of the ribosomal stalk which helps the ribosome interact with GTP-bound translation factors. Is thus essential for accurate translation. The protein is Large ribosomal subunit protein bL12 of Pseudomonas syringae pv. tomato (strain ATCC BAA-871 / DC3000).